A 520-amino-acid chain; its full sequence is GMP synthase [glutamine-hydrolyzing] (520 aa).

The 194-residue stretch at 9–202 folds into the Glutamine amidotransferase type-1 domain; sequence SVLIIDFGSQ…VHNIAGITGD (194 aa). C86 (nucleophile) is an active-site residue. Active-site residues include H176 and E178. The GMPS ATP-PPase domain maps to 203 to 395; sequence WSMSAYRAKA…LGLPDSFIGR (193 aa). Residue 230 to 236 coordinates ATP; that stretch reads SGGVDSS.

Homodimer.

The catalysed reaction is XMP + L-glutamine + ATP + H2O = GMP + L-glutamate + AMP + diphosphate + 2 H(+). It functions in the pathway purine metabolism; GMP biosynthesis; GMP from XMP (L-Gln route): step 1/1. Catalyzes the synthesis of GMP from XMP. This Allorhizobium ampelinum (strain ATCC BAA-846 / DSM 112012 / S4) (Agrobacterium vitis (strain S4)) protein is GMP synthase [glutamine-hydrolyzing].